The primary structure comprises 877 residues: Neurotrypsin (877 aa).

The signal sequence occupies residues 1-20 (MTLARFVLALVLGALPEVVS). An N-linked (GlcNAc...) asparagine glycan is attached at asparagine 26. The tract at residues 31–90 (HRHRHRHSPPPGLQYPYYLPTQQRPPRTRPPPPLPRFPRPPRALPAQRPHALQAGHTPRP) is disordered. The segment covering 44-55 (QYPYYLPTQQRP) has biased composition (low complexity). The span at 58–73 (TRPPPPLPRFPRPPRA) shows a compositional bias: pro residues. Residues 95–167 (CPAGEPWVSV…GKVDWGYCDC (73 aa)) enclose the Kringle domain. 20 disulfide bridges follow: cysteine 95–cysteine 167, cysteine 111–cysteine 151, cysteine 140–cysteine 165, cysteine 197–cysteine 261, cysteine 210–cysteine 271, cysteine 241–cysteine 251, cysteine 307–cysteine 371, cysteine 320–cysteine 381, cysteine 351–cysteine 361, cysteine 414–cysteine 477, cysteine 427–cysteine 487, cysteine 457–cysteine 467, cysteine 527–cysteine 591, cysteine 540–cysteine 601, cysteine 571–cysteine 581, cysteine 621–cysteine 752, cysteine 663–cysteine 679, cysteine 767–cysteine 833, cysteine 796–cysteine 810, and cysteine 823–cysteine 852. SRCR domains lie at 172–273 (VRLR…TCSF), 282–383 (IRLV…SCTP), 389–489 (IRLA…ACYP), and 502–603 (VRLM…ICDY). Residues 621–632 (CGLRLLHRRQKR) are zymogen activation region. A Peptidase S1 domain is found at 633 to 876 (IIGGKNSLRG…FVPWIKSVTK (244 aa)). Histidine 678 (charge relay system) is an active-site residue. A glycan (N-linked (GlcNAc...) asparagine) is linked at asparagine 685. Aspartate 728 functions as the Charge relay system in the catalytic mechanism. Serine 827 functions as the Charge relay system in the catalytic mechanism.

It belongs to the peptidase S1 family.

The protein localises to the secreted. Plays a role in neuronal plasticity and the proteolytic action may subserve structural reorganizations associated with learning and memory operations. This is Neurotrypsin (PRSS12) from Pongo pygmaeus (Bornean orangutan).